The primary structure comprises 753 residues: MEQRGWTLQCTAFAFFCVWCALSSVKAKRQFVNEWAAEIPGGQEAASAIAEELGYDLLGQIGSLENHYLFKHKSHPRRSRRSALHITKRLSDDDRVTWAEQQYEKERSKRSVQKDSALDLFNDPMWNQQWYLQDTRMTAALPKLDLHVIPVWEKGITGKGVVITVLDDGLEWNHTDIYANYDPEASYDFNDNDHDPFPRYDLTNENKHGTRCAGEIAMQANNHKCGVGVAYNSKVGGIRMLDGIVTDAIEASSIGFNPGHVDIYSASWGPNDDGKTVEGPGRLAQKAFEYGVKQGRQGKGSIFVWASGNGGRQGDNCDCDGYTDSIYTISISSASQQGLSPWYAEKCSSTLATSYSSGDYTDQRITSADLHNDCTETHTGTSASAPLAAGIFALALEANPNLTWRDMQHLVVWTSEYDPLASNPGWKKNGAGLMVNSRFGFGLLNAKALVDLADPRTWRNVPEKKECVVKDNNFEPRALKANGEVIVEIPTRACEGQENAIKSLEHVQFEATIEYSRRGDLHVTLTSAVGTSTVLLAERERDTSPNGFKNWDFMSVHTWGENPVGTWTLKITDMSGRMQNEGRIVNWKLILHGTSSQPEHMKQPRVYTSYNTVQNDRRGVEKMVNVVEKRPTQKSLNGNLLVPKNSSSSNVEGRRDEQVQGTPSKAMLRLLQSAFSKNALSKQSPKKSPSAKLSIPYESFYEALEKLNKPSKLEGSEDSLYSDYVDVFYNTKPYKHRDDRLLQALMDILNEEN.

The first 27 residues, 1-27 (MEQRGWTLQCTAFAFFCVWCALSSVKA), serve as a signal peptide directing secretion. Residues 28–110 (KRQFVNEWAA…QQYEKERSKR (83 aa)) constitute a propeptide that is removed on maturation. The 322-residue stretch at 129–450 (QWYLQDTRMT…FGLLNAKALV (322 aa)) folds into the Peptidase S8 domain. Residues Asp167 and His208 each act as charge relay system in the active site. Disulfide bonds link Cys225–Cys374 and Cys317–Cys347. Ser382 functions as the Charge relay system in the catalytic mechanism. N-linked (GlcNAc...) asparagine glycosylation occurs at Asn401. A P/Homo B domain is found at 460–597 (NVPEKKECVV…KLILHGTSSQ (138 aa)). A disulfide bridge links Cys467 with Cys494. Over residues 633 to 651 (QKSLNGNLLVPKNSSSSNV) the composition is skewed to polar residues. The disordered stretch occupies residues 633-663 (QKSLNGNLLVPKNSSSSNVEGRRDEQVQGTP). An N-linked (GlcNAc...) asparagine glycan is attached at Asn645.

Belongs to the peptidase S8 family. Furin subfamily. Requires Ca(2+) as cofactor.

Its subcellular location is the cytoplasmic vesicle. It localises to the secretory vesicle. The catalysed reaction is Release of protein hormones, neuropeptides and renin from their precursors, generally by hydrolysis of -Lys-Arg-|- bonds.. Functionally, involved in the processing of hormone and other protein precursors at sites comprised of pairs of basic amino acid residues. Substrates include POMC, renin, enkephalin, dynorphin, somatostatin, insulin and AGRP. In Mus cookii (Cook's mouse), this protein is Neuroendocrine convertase 1 (Pcsk1).